A 61-amino-acid chain; its full sequence is uncharacterized protein (61 aa).

This is an uncharacterized protein from Treponema pallidum (strain Nichols).